Consider the following 987-residue polypeptide: UvrABC system protein A (987 aa).

33 to 40 provides a ligand contact to ATP; the sequence is GLSGSGKS. Residues 255-282 form a C4-type zinc finger; sequence CPVCDYSLPELEPRLFSFNAPVGACPSC. 2 consecutive ABC transporter domains span residues 312-589 and 609-938; these read WDRR…PRSL and PNPK…QFLA. Residue 642 to 649 participates in ATP binding; sequence GVSGSGKS. Residues 741 to 767 form a C4-type zinc finger; the sequence is CEACQGDGMIKVEMHFLPDVYVPCDVC. The segment at 948-987 is disordered; it reads ETRPAAMANKPDARPPRKVKPEKVAKAAKSATKKTAKKAS. The segment covering 958–972 has biased composition (basic and acidic residues); it reads PDARPPRKVKPEKVA. Positions 978–987 are enriched in basic residues; sequence ATKKTAKKAS.

Belongs to the ABC transporter superfamily. UvrA family. In terms of assembly, forms a heterotetramer with UvrB during the search for lesions.

The protein resides in the cytoplasm. The UvrABC repair system catalyzes the recognition and processing of DNA lesions. UvrA is an ATPase and a DNA-binding protein. A damage recognition complex composed of 2 UvrA and 2 UvrB subunits scans DNA for abnormalities. When the presence of a lesion has been verified by UvrB, the UvrA molecules dissociate. This chain is UvrABC system protein A, found in Xanthomonas axonopodis pv. citri (strain 306).